The primary structure comprises 314 residues: Methionyl-tRNA formyltransferase (314 aa).

(6S)-5,6,7,8-tetrahydrofolate is bound at residue 110–113 (SLLP).

The protein belongs to the Fmt family.

It catalyses the reaction L-methionyl-tRNA(fMet) + (6R)-10-formyltetrahydrofolate = N-formyl-L-methionyl-tRNA(fMet) + (6S)-5,6,7,8-tetrahydrofolate + H(+). In terms of biological role, attaches a formyl group to the free amino group of methionyl-tRNA(fMet). The formyl group appears to play a dual role in the initiator identity of N-formylmethionyl-tRNA by promoting its recognition by IF2 and preventing the misappropriation of this tRNA by the elongation apparatus. The sequence is that of Methionyl-tRNA formyltransferase from Lactobacillus johnsonii (strain CNCM I-12250 / La1 / NCC 533).